The following is a 447-amino-acid chain: Cysteine--tRNA ligase (447 aa).

Residue cysteine 28 participates in Zn(2+) binding. A 'HIGH' region motif is present at residues 30–40 (PTVYNYIHIGN). Cysteine 211, histidine 236, and glutamate 240 together coordinate Zn(2+). A 'KMSKS' region motif is present at residues 268–272 (KMSKS). Lysine 271 contributes to the ATP binding site.

Belongs to the class-I aminoacyl-tRNA synthetase family. Monomer. Requires Zn(2+) as cofactor.

The protein resides in the cytoplasm. It catalyses the reaction tRNA(Cys) + L-cysteine + ATP = L-cysteinyl-tRNA(Cys) + AMP + diphosphate. This chain is Cysteine--tRNA ligase, found in Streptococcus agalactiae serotype V (strain ATCC BAA-611 / 2603 V/R).